Consider the following 504-residue polypeptide: L-arabinose isomerase (504 aa).

Mn(2+) is bound by residues E308, E335, H352, and H452.

Belongs to the arabinose isomerase family. Mn(2+) is required as a cofactor.

It catalyses the reaction beta-L-arabinopyranose = L-ribulose. It participates in carbohydrate degradation; L-arabinose degradation via L-ribulose; D-xylulose 5-phosphate from L-arabinose (bacterial route): step 1/3. In terms of biological role, catalyzes the conversion of L-arabinose to L-ribulose. In Bifidobacterium adolescentis (strain ATCC 15703 / DSM 20083 / NCTC 11814 / E194a), this protein is L-arabinose isomerase.